Here is a 217-residue protein sequence, read N- to C-terminus: Adenylate kinase (217 aa).

11 to 16 (GAGKGT) serves as a coordination point for ATP. Positions 31-60 (STGDMFREAMANKTPVGLEAKSYIDKGDLV) are NMP. Residues Thr32, Arg37, 58 to 60 (DLV), 86 to 89 (GFPR), and Gln93 each bind AMP. The segment at 127-165 (ARFMCKNCGATYNKFSKKPKVEGTCDRCGGHEFYQREDD) is LID. Arg128 serves as a coordination point for ATP. Positions 131 and 134 each coordinate Zn(2+). 137 to 138 (TY) serves as a coordination point for ATP. Residues Cys151 and Cys154 each contribute to the Zn(2+) site. AMP-binding residues include Arg162 and Arg173. Gln201 contributes to the ATP binding site.

This sequence belongs to the adenylate kinase family. Monomer.

It localises to the cytoplasm. The enzyme catalyses AMP + ATP = 2 ADP. The protein operates within purine metabolism; AMP biosynthesis via salvage pathway; AMP from ADP: step 1/1. Catalyzes the reversible transfer of the terminal phosphate group between ATP and AMP. Plays an important role in cellular energy homeostasis and in adenine nucleotide metabolism. This is Adenylate kinase from Lactobacillus delbrueckii subsp. bulgaricus (strain ATCC 11842 / DSM 20081 / BCRC 10696 / JCM 1002 / NBRC 13953 / NCIMB 11778 / NCTC 12712 / WDCM 00102 / Lb 14).